Consider the following 102-residue polypeptide: Small ribosomal subunit protein uS10 (102 aa).

The protein belongs to the universal ribosomal protein uS10 family. In terms of assembly, part of the 30S ribosomal subunit.

Involved in the binding of tRNA to the ribosomes. This is Small ribosomal subunit protein uS10 from Streptococcus uberis (strain ATCC BAA-854 / 0140J).